Here is a 501-residue protein sequence, read N- to C-terminus: Ribose import ATP-binding protein RbsA (501 aa).

ABC transporter domains are found at residues 5 to 241 (LQLK…VGRK) and 252 to 495 (APGD…VGKL). 37-44 (GENGAGKS) serves as a coordination point for ATP.

It belongs to the ABC transporter superfamily. Ribose importer (TC 3.A.1.2.1) family. As to quaternary structure, the complex is composed of an ATP-binding protein (RbsA), two transmembrane proteins (RbsC) and a solute-binding protein (RbsB).

The protein localises to the cell inner membrane. It carries out the reaction D-ribose(out) + ATP + H2O = D-ribose(in) + ADP + phosphate + H(+). In terms of biological role, part of the ABC transporter complex RbsABC involved in ribose import. Responsible for energy coupling to the transport system. The polypeptide is Ribose import ATP-binding protein RbsA (Escherichia coli (strain UTI89 / UPEC)).